The following is a 496-amino-acid chain: Probable cytosol aminopeptidase (496 aa).

The Mn(2+) site is built by Lys262 and Asp267. The active site involves Lys274. 3 residues coordinate Mn(2+): Asp285, Asp344, and Glu346. Residue Arg348 is part of the active site.

Belongs to the peptidase M17 family. It depends on Mn(2+) as a cofactor.

Its subcellular location is the cytoplasm. The enzyme catalyses Release of an N-terminal amino acid, Xaa-|-Yaa-, in which Xaa is preferably Leu, but may be other amino acids including Pro although not Arg or Lys, and Yaa may be Pro. Amino acid amides and methyl esters are also readily hydrolyzed, but rates on arylamides are exceedingly low.. It catalyses the reaction Release of an N-terminal amino acid, preferentially leucine, but not glutamic or aspartic acids.. In terms of biological role, presumably involved in the processing and regular turnover of intracellular proteins. Catalyzes the removal of unsubstituted N-terminal amino acids from various peptides. This Rhizobium etli (strain CIAT 652) protein is Probable cytosol aminopeptidase.